Reading from the N-terminus, the 283-residue chain is D-alanine aminotransferase (283 aa).

Position 32 (Y32) interacts with substrate. R51 contributes to the pyridoxal 5'-phosphate binding site. Residues R99 and H101 each contribute to the substrate site. K146 serves as the catalytic Proton acceptor. K146 bears the N6-(pyridoxal phosphate)lysine mark. Residue E178 coordinates pyridoxal 5'-phosphate.

This sequence belongs to the class-IV pyridoxal-phosphate-dependent aminotransferase family. Homodimer. Pyridoxal 5'-phosphate is required as a cofactor.

It catalyses the reaction D-alanine + 2-oxoglutarate = D-glutamate + pyruvate. Its function is as follows. Acts on the D-isomers of alanine, leucine, aspartate, glutamate, aminobutyrate, norvaline and asparagine. The enzyme transfers an amino group from a substrate D-amino acid to the pyridoxal phosphate cofactor to form pyridoxamine and an alpha-keto acid in the first half-reaction. The second-half reaction is the reverse of the first, transferring the amino group from the pyridoxamine to a second alpha-keto acid to form the product D-amino acid via a ping-pong mechanism. This is an important process in the formation of D-alanine and D-glutamate, which are essential bacterial cell wall components. The sequence is that of D-alanine aminotransferase (dat) from Bacillus sp. (strain YM-1).